The sequence spans 1373 residues: DNA-directed RNA polymerase subunit beta'' (1373 aa).

Residues Cys220, Cys291, Cys298, and Cys301 each contribute to the Zn(2+) site.

The protein belongs to the RNA polymerase beta' chain family. RpoC2 subfamily. As to quaternary structure, in plastids the minimal PEP RNA polymerase catalytic core is composed of four subunits: alpha, beta, beta', and beta''. When a (nuclear-encoded) sigma factor is associated with the core the holoenzyme is formed, which can initiate transcription. It depends on Zn(2+) as a cofactor.

It localises to the plastid. It is found in the chloroplast. The enzyme catalyses RNA(n) + a ribonucleoside 5'-triphosphate = RNA(n+1) + diphosphate. In terms of biological role, DNA-dependent RNA polymerase catalyzes the transcription of DNA into RNA using the four ribonucleoside triphosphates as substrates. The polypeptide is DNA-directed RNA polymerase subunit beta'' (Silene latifolia (White campion)).